The sequence spans 200 residues: Acyl-homoserine-lactone synthase (200 aa).

The protein belongs to the autoinducer synthase family.

The enzyme catalyses a fatty acyl-[ACP] + S-adenosyl-L-methionine = an N-acyl-L-homoserine lactone + S-methyl-5'-thioadenosine + holo-[ACP] + H(+). Its function is as follows. Required for the synthesis of BHL (N-butanoyl-L-homoserine lactone). In Serratia liquefaciens, this protein is Acyl-homoserine-lactone synthase (swrI).